A 207-amino-acid polypeptide reads, in one-letter code: Small ribosomal subunit protein bS6c (207 aa).

A chloroplast-targeting transit peptide spans 1–59 (MASSLCVSNSTICPLPNVSSQPLLSFSHSLRPFISKSKPMCASIQKRDGSQFVVKSQAL). Residues 69–99 (GFGSDDDPTSPSGSGVSTALEDKPEPQCPPG) are disordered. Residues 77–86 (TSPSGSGVST) show a composition bias toward low complexity.

This sequence belongs to the bacterial ribosomal protein bS6 family. Part of the 30S ribosomal subunit.

It is found in the plastid. Its subcellular location is the chloroplast. Its function is as follows. Binds together with bS18 to 16S ribosomal RNA. This is Small ribosomal subunit protein bS6c (RPS6) from Arabidopsis thaliana (Mouse-ear cress).